Reading from the N-terminus, the 686-residue chain is Mannan-binding lectin serine protease 2 (686 aa).

A signal peptide spans M1 to A15. The region spanning T16–E137 is the CUB 1 domain. The Ca(2+) site is built by E67, D75, D120, S122, N123, D138, I139, and E141. A disulfide bridge connects residues C72 and C90. In terms of domain architecture, EGF-like; calcium-binding spans D138–S181. 12 disulfide bridges follow: C142–C156, C152–C165, C167–C180, C184–C211, C241–C259, C300–C348, C328–C361, C366–C412, C396–C430, C434–C552, C598–C618, and C629–C660. Ca(2+)-binding residues include N158, H159, and G162. The residue at position 158 (N158) is a (3R)-3-hydroxyasparagine. Residues C184–T296 enclose the CUB 2 domain. 2 Sushi domains span residues Q298–I363 and V364–P432. The region spanning I445 to S684 is the Peptidase S1 domain. Residues H483 and D532 each act as charge relay system in the active site. The Charge relay system role is filled by S633.

The protein belongs to the peptidase S1 family. In terms of assembly, homodimer; disulfide-linked. Binds MBL2. Isoform 2 binds to MASP1. Binds SERPING1. Dimerization and MBL2 binding requires calcium ions. In terms of processing, the iron and 2-oxoglutarate dependent 3-hydroxylation of aspartate and asparagine is (R) stereospecific within EGF domains. Post-translationally, activated by cleavage after Arg-444. The uncleaved zymogen is inactive towards synthetic substrates, but has sufficient activity to effect autocatalytic cleavage. As to expression, plasma.

It localises to the secreted. It catalyses the reaction Selective cleavage after Arg-223 in complement component C2 (-Ser-Leu-Gly-Arg-|-Lys-Ile-Gln-Ile) and after Arg-76 in complement component C4 (-Gly-Leu-Gln-Arg-|-Ala-Leu-Glu-Ile).. Serum protease that plays an important role in the activation of the complement system via mannose-binding lectin. After activation by auto-catalytic cleavage it cleaves C2 and C4, leading to their activation and to the formation of C3 convertase. The chain is Mannan-binding lectin serine protease 2 (MASP2) from Homo sapiens (Human).